The primary structure comprises 221 residues: HP1-HOAP-interacting protein (221 aa).

Residues 69–113 (NAKRHKMARETAASITDVSGSQSSSHQSAPSLHVSGQSSEFGASY) form a disordered region. Residues 86-103 (VSGSQSSSHQSAPSLHVS) are compositionally biased toward low complexity.

Component of the HipHop-HOAP telomere-capping complex, composed of at least HipHop and cav/HOAP, and may include Su(var)205/HP1; HipHop and cav/HOAP, but not Su(var)205, are interdependent for their protein stability. Interacts (via N-terminus) with cav/HOAP and Su(var)205/HP1. The HipHop-HOAP complex recruits the MTV complex, consisting of moi/modigliani, tea and ver/verrocchio, to telomeres to form the terminin telomere-capping complex.

It is found in the nucleus. Its subcellular location is the chromosome. It localises to the telomere. Functionally, part of the HipHop-HOAP complex that recruits the MTV complex to form the terminin telomere-capping complex, which binds to chromosome ends in a sequence-independent manner and prevents telomere fusion. This Drosophila melanogaster (Fruit fly) protein is HP1-HOAP-interacting protein.